A 187-amino-acid polypeptide reads, in one-letter code: Glutathione-dependent formaldehyde-activating enzyme (187 aa).

The CENP-V/GFA domain maps to 20-167 (FAGGTLVCKC…LKELGLEPYD (148 aa)). 7 residues coordinate Zn(2+): Cys27, Cys29, Cys48, Cys50, Cys53, Cys95, and Cys98.

This sequence belongs to the Gfa family. Requires Zn(2+) as cofactor.

It catalyses the reaction S-(hydroxymethyl)glutathione = glutathione + formaldehyde. Its pathway is one-carbon metabolism; formaldehyde degradation; formate from formaldehyde (glutathione route): step 1/3. Its function is as follows. Catalyzes the condensation of formaldehyde and glutathione to S-hydroxymethylglutathione. The protein is Glutathione-dependent formaldehyde-activating enzyme of Bradyrhizobium sp. (strain BTAi1 / ATCC BAA-1182).